The chain runs to 154 residues: Transcriptional repressor NrdR (154 aa).

A zinc finger lies at C3–C34. The ATP-cone domain occupies L49–S139.

Belongs to the NrdR family. The cofactor is Zn(2+).

Negatively regulates transcription of bacterial ribonucleotide reductase nrd genes and operons by binding to NrdR-boxes. This Carboxydothermus hydrogenoformans (strain ATCC BAA-161 / DSM 6008 / Z-2901) protein is Transcriptional repressor NrdR.